The sequence spans 533 residues: Probable ADP-ribosylation factor-binding protein C25H2.16c (533 aa).

Residues 15–151 (ATEPYAFEPD…LLSYKGYTFP (137 aa)) enclose the VHS domain. Positions 178–305 (REAMSAKLQE…LLTQYDHLLE (128 aa)) constitute a GAT domain. S320 carries the post-translational modification Phosphoserine. One can recognise a GAE domain in the interval 417 to 532 (NNFTSTCAFE…EYTGQSSIRL (116 aa)).

The protein belongs to the GGA protein family.

The protein resides in the golgi apparatus. It is found in the trans-Golgi network. May play a role in the regulation of membrane traffic through the trans-Golgi network. This is Probable ADP-ribosylation factor-binding protein C25H2.16c from Schizosaccharomyces pombe (strain 972 / ATCC 24843) (Fission yeast).